A 152-amino-acid chain; its full sequence is Small ribosomal subunit protein uS15 (152 aa).

Residues 1-16 (MARIHARRRGKSGSKR) show a composition bias toward basic residues. Residues 1 to 21 (MARIHARRRGKSGSKRIYRDS) are disordered.

The protein belongs to the universal ribosomal protein uS15 family. In terms of assembly, part of the 30S ribosomal subunit.

This Archaeoglobus fulgidus (strain ATCC 49558 / DSM 4304 / JCM 9628 / NBRC 100126 / VC-16) protein is Small ribosomal subunit protein uS15.